A 377-amino-acid chain; its full sequence is Gibberellin 20 oxidase 1 (377 aa).

The 101-residue stretch at Glu222–Pro322 folds into the Fe2OG dioxygenase domain. Fe cation is bound by residues His247, Asp249, and His303. Residue Arg313 is part of the active site.

Belongs to the iron/ascorbate-dependent oxidoreductase family. GA20OX subfamily. Fe(2+) serves as cofactor. The cofactor is L-ascorbate. In terms of tissue distribution, highly expressed in stems and inflorescence tissues. Detected in seeds, roots, leaves and siliques.

It carries out the reaction gibberellin A12 + 2 2-oxoglutarate + 3 O2 + H(+) = gibberellin A9 + 2 succinate + 3 CO2 + 2 H2O. The catalysed reaction is gibberellin A12 + 2-oxoglutarate + O2 = gibberellin A15 + succinate + CO2. The enzyme catalyses gibberellin A15 + 2-oxoglutarate + O2 = gibberellin A24 + succinate + CO2 + H2O. It catalyses the reaction gibberellin A53 + 2-oxoglutarate + O2 = gibberellin A44 + succinate + CO2. The protein operates within plant hormone biosynthesis; gibberellin biosynthesis. Its function is as follows. Key oxidase enzyme in the biosynthesis of gibberellin that catalyzes the conversion of GA12 to GA9, via a three-step oxidation at C-20 of the GA skeleton. GA53 is less effectively oxidized than GA12 and is only oxidized one step to GA44. Involved in the promotion of the floral transition, fertility and silique elongation, but plays only a minor role in elongation of seedling organs. Acts redundantly with GA20OX2. This chain is Gibberellin 20 oxidase 1 (GA20OX1), found in Arabidopsis thaliana (Mouse-ear cress).